Reading from the N-terminus, the 751-residue chain is Ecdysteroid-phosphate phosphatase (751 aa).

The 45-residue stretch at 16–60 (CISKQHLTPLQTLLQMGFPRHRAEKALASTGNRGVQIASDWLLAH) folds into the UBA domain. The region spanning 271-336 (ATKQVQKVVY…PVNYTERTAE (66 aa)) is the SH3 domain. Disordered regions lie at residues 367 to 394 (GRSI…FEES) and 458 to 484 (EPPA…PGSL). Residues 466 to 479 (RPDDTLSVHSDHSL) are compositionally biased toward basic and acidic residues. The segment at 490–751 (KNRKIYIMRH…RFEWNALSAT (262 aa)) is phosphatase-like. Arg-498 is a catalytic residue. His-499 acts as the Tele-phosphohistidine intermediate in catalysis. The active site involves His-681.

The protein localises to the cytoplasm. It localises to the cytosol. It is found in the nucleus. It catalyses the reaction ecdysone 22-phosphate + H2O = ecdysone + phosphate. The enzyme catalyses 20-hydroxyecdysone 22-phosphate + H2O = 20-hydroxyecdysone + phosphate. It carries out the reaction 2-deoxyecdysone 22-phosphate + H2O = 2-deoxyecdysone + phosphate. Functionally, steroid phosphatase that dephosphorylates ecdysteroids such as ecdysone 22-phosphate (E22P), 3-epi-ecdysone 22-phosphate (E22P) and 3-epi-ecdysone 2-phosphate (E2P). Likely catalyzes the conversion of inactive phosphorylated ecdysteroids into their active forms. Shows high activity towards ecdysone 22-phosphate (E22P), but is also significantly active against 3-epi-ecdysone 22-phosphate (E22P) and 3-epi-ecdysone 2-phosphate (E2P). Also displays acid phosphatase activity towards 4-nitrophenyl phosphate (pNNP) in vitro. Has no activity towards 3-epi-ecdysone 3-phosphate (E3P). In Drosophila melanogaster (Fruit fly), this protein is Ecdysteroid-phosphate phosphatase.